Here is a 490-residue protein sequence, read N- to C-terminus: Probable glycine dehydrogenase (decarboxylating) subunit 2 (490 aa).

The residue at position 273 (Lys-273) is an N6-(pyridoxal phosphate)lysine.

Belongs to the GcvP family. C-terminal subunit subfamily. In terms of assembly, the glycine cleavage system is composed of four proteins: P, T, L and H. In this organism, the P 'protein' is a heterodimer of two subunits. It depends on pyridoxal 5'-phosphate as a cofactor.

It catalyses the reaction N(6)-[(R)-lipoyl]-L-lysyl-[glycine-cleavage complex H protein] + glycine + H(+) = N(6)-[(R)-S(8)-aminomethyldihydrolipoyl]-L-lysyl-[glycine-cleavage complex H protein] + CO2. Its function is as follows. The glycine cleavage system catalyzes the degradation of glycine. The P protein binds the alpha-amino group of glycine through its pyridoxal phosphate cofactor; CO(2) is released and the remaining methylamine moiety is then transferred to the lipoamide cofactor of the H protein. In Staphylococcus aureus (strain bovine RF122 / ET3-1), this protein is Probable glycine dehydrogenase (decarboxylating) subunit 2.